A 599-amino-acid polypeptide reads, in one-letter code: DNA mismatch repair protein MutL (599 aa).

Belongs to the DNA mismatch repair MutL/HexB family.

Functionally, this protein is involved in the repair of mismatches in DNA. It is required for dam-dependent methyl-directed DNA mismatch repair. May act as a 'molecular matchmaker', a protein that promotes the formation of a stable complex between two or more DNA-binding proteins in an ATP-dependent manner without itself being part of a final effector complex. This is DNA mismatch repair protein MutL from Rhodopseudomonas palustris (strain BisB18).